A 1732-amino-acid polypeptide reads, in one-letter code: MSGEVRLRQLEQFILDGPAQTNGQCFSVETLLDILICLYDECNNSPLRREKNILEYLEWAKPFTSKVKQMRLHREDFEILKVIGRGAFGEVAVVKLKNADKVFAMKILNKWEMLKRAETACFREERDVLVNGDSKWITTLHYAFQDDNNLYLVMDYYVGGDLLTLLSKFEDRLPEEMARFYLAEMVIAIDSVHQLHYVHRDIKPDNILMDMNGHIRLADFGSCLKLMEDGTVQSSVAVGTPDYISPEILQAMEDGKGRYGPECDWWSLGVCMYEMLYGETPFYAESLVETYGKIMNHKERFQFPTQVTDVSENAKDLIRRLICSREHRLGQNGIEDFKKHPFFSGIDWDNIRNCEAPYIPEVSSPTDTSNFDVDDDCLKNSETMPPPTHTAFSGHHLPFVGFTYTSSCVLSDRSCLRVTAGPTSLDLDVNVQRTLDNNLATEAYERRIKRLEQEKLELTRKLQESTQTVQALQYSTVDGPLTASKDLEIKSLKEEIEKLRKQVAEVNHLEQQLEEANSVRRELDDAFRQIKAFEKQIKTLQQEREELNKELVQASERLKNQSKELKDAHCQRKLAMQEFMEINERLTELHTQKQKLARHVRDKEEEVDLVMQKAESLRQELRRAERAKKELEVHTEALIAEASKDRKLREQSRHYSKQLENELEGLKQKQISYSPGICSIEHQQEITKLKTDLEKKSIFYEEEISKREGIHASEIKNLKKELHDSEGQQLALNKEIMVLKDKLEKTRRESQSEREEFENEFKQQYEREKVLLTEENKKLTSELDKLTSLYESLSLRNQHLEEEVKDLADKKESVAHWEAQITEIIQWVSDEKDARGYLQALASKMTEELEALRNSSLGTRATDMPWKMRRFAKLDMSARLELQSALDAEIRAKQAIQEELNKVKASNIITECKLKDSEKKNLELLSEIEQLIKDTEELRSEKGVEHRDSQHSFLAFLNTPTDALDQFERSPSCTPAGKGRRIADSAPLPVHTPTLRKKGCPASAGFPPKRKTHQFFVKSFTAPTKCHQCTSLMVGLIRQGCSCEVCGFSCHITCVNKAPTTCPVPPEQTKGPLGIDPQKGVGTAYEGHVRIPKPAGVKKGWQRALAVVCDFKLFLYDIAEGKASQPSSVISQVIDMRDEEFSVSSVLASDVIHASRKDIPCIFRVTASQLSAPSDKCSILMLADSETERSKWVGVLSELHKVLKKNKFRDRSVYVPKEAYDSTLPLIKTTQAAAIIDHERVALGNEEGLFVVHVTKDEIIRVGDNKKIHQIELIPSDQLVAVISGRNRHVRLFPMSALDGRETDFYKLAETKGCQTIAAGKVRHGALSCLCVAMKRQVLCYELFQSKTRHRKFKEIQVPCNVQWMAIFSEHLCVGFQSGFLRYPLNGEGSPCNMLHSNDHTLAFITHQPMDAICAVEISNKEYLLCFSSIGIYTDCQGRRSRQQELMWPANPSSCCYNAPYLSIYSENAVDIFDVNSMEWIQTLPLKKVRPLNTEGSLNLLGLETIRLIYFKNKMAEGDELVVPETSDNSRKQMVRNINNKRRYSFRVPEEERMQQRREMLRDPEMRNKLISNPTNFNHIAHMGPGDGIQILKDLPMNPRPQESRTVFSGSVSIPSITKSRPEPGRSMSASSGLSARSSAQNGSALKREFSGGSYNTKRQPMPSPSEGSLSSGGVDQGSDAPVRDYDGEDSDSPRHSTASNSSNLSSPPSPVSPRKTKSLSLESTDRGSWDP.

The Protein kinase domain maps to 77–343 (FEILKVIGRG…IEDFKKHPFF (267 aa)). ATP is bound by residues 83–91 (IGRGAFGEV) and K106. D201 functions as the Proton acceptor in the catalytic mechanism. S222 and S234 each carry phosphoserine; by autocatalysis. T240 carries the phosphothreonine; by autocatalysis modification. Residues 344-414 (SGIDWDNIRN…TSSCVLSDRS (71 aa)) form the AGC-kinase C-terminal domain. 3 coiled-coil regions span residues 437–670 (NNLA…KQKQ), 713–820 (SEIK…WEAQ), and 880–943 (LELQ…SEKG). The segment at 973-1002 (CTPAGKGRRIADSAPLPVHTPTLRKKGCPA) is disordered. A Phorbol-ester/DAG-type zinc finger spans residues 1012 to 1062 (THQFFVKSFTAPTKCHQCTSLMVGLIRQGCSCEVCGFSCHITCVNKAPTTC). Residues 1082–1201 (GTAYEGHVRI…WVGVLSELHK (120 aa)) form the PH domain. Residue S1127 is modified to Phosphoserine. A CNH domain is found at 1227–1499 (IKTTQAAAII…RPLNTEGSLN (273 aa)). Residue S1545 is modified to Phosphoserine. A CRIB domain is found at 1571-1584 (ISNPTNFNHIAHMG). The interval 1592 to 1732 (LKDLPMNPRP…ESTDRGSWDP (141 aa)) is disordered. Over residues 1604–1619 (SRTVFSGSVSIPSITK) the composition is skewed to polar residues. A phosphoserine mark is found at S1611, S1613, S1629, S1651, S1664, S1669, S1693, S1719, and S1721. Over residues 1625-1640 (GRSMSASSGLSARSSA) the composition is skewed to low complexity. A compositionally biased stretch (low complexity) spans 1665-1674 (PSEGSLSSGG).

Belongs to the protein kinase superfamily. AGC Ser/Thr protein kinase family. DMPK subfamily. As to quaternary structure, homodimer and homotetramer via the coiled coil regions. Interacts tightly with GTP-bound but not GDP-bound CDC42. Forms a tripartite complex with MYO18A and LURAP1 with the latter acting as an adapter connecting CDC42BPA and MYO18A. LURAP1 binding results in activation of CDC42BPA by abolition of its negative autoregulation. Interacts with LURAP1. Interacts (via AGC-kinase C-terminal domain) with FAM89B/LRAP25 (via LRR repeat). Forms a tripartite complex with FAM89B/LRAP25 and LIMK1. Mg(2+) serves as cofactor. Post-translationally, proteolytically cleaved by caspases upon apoptosis induction. The cleavage at Asp-478 by CASP3 increases its kinase activity (in vitro). As to expression, highly expressed in the brain and lung and present in lower levels in all other tissues tested.

The protein resides in the cytoplasm. It is found in the cell projection. The protein localises to the lamellipodium. It carries out the reaction L-seryl-[protein] + ATP = O-phospho-L-seryl-[protein] + ADP + H(+). The enzyme catalyses L-threonyl-[protein] + ATP = O-phospho-L-threonyl-[protein] + ADP + H(+). Maintained in an inactive, closed conformation by an interaction between the kinase domain and the negative autoregulatory C-terminal coiled-coil region. Agonist binding to the phorbol ester binding site disrupts this, releasing the kinase domain to allow N-terminus-mediated dimerization and kinase activation by transautophosphorylation. Inhibited by chelerythrine chloride. Functionally, serine/threonine-protein kinase which is an important downstream effector of CDC42 and plays a role in the regulation of cytoskeleton reorganization and cell migration. Regulates actin cytoskeletal reorganization via phosphorylation of PPP1R12A and MYL9/MLC2. In concert with MYO18A and LURAP1, is involved in modulating lamellar actomyosin retrograde flow that is crucial to cell protrusion and migration. Phosphorylates: PPP1R12C, LIMK1 and LIMK2. May play a role in TFRC-mediated iron uptake. In concert with FAM89B/LRAP25 mediates the targeting of LIMK1 to the lamellipodium resulting in its activation and subsequent phosphorylation of CFL1 which is important for lamellipodial F-actin regulation. Triggers the formation of an extrusion apical actin ring required for epithelial extrusion of apoptotic cells. The sequence is that of Serine/threonine-protein kinase MRCK alpha from Rattus norvegicus (Rat).